The sequence spans 416 residues: 4-hydroxy-3-methylbut-2-en-1-yl diphosphate synthase (flavodoxin) (416 aa).

[4Fe-4S] cluster contacts are provided by Cys304, Cys307, Cys350, and Glu357.

It belongs to the IspG family. [4Fe-4S] cluster is required as a cofactor.

The enzyme catalyses (2E)-4-hydroxy-3-methylbut-2-enyl diphosphate + oxidized [flavodoxin] + H2O + 2 H(+) = 2-C-methyl-D-erythritol 2,4-cyclic diphosphate + reduced [flavodoxin]. The protein operates within isoprenoid biosynthesis; isopentenyl diphosphate biosynthesis via DXP pathway; isopentenyl diphosphate from 1-deoxy-D-xylulose 5-phosphate: step 5/6. Converts 2C-methyl-D-erythritol 2,4-cyclodiphosphate (ME-2,4cPP) into 1-hydroxy-2-methyl-2-(E)-butenyl 4-diphosphate. The protein is 4-hydroxy-3-methylbut-2-en-1-yl diphosphate synthase (flavodoxin) of Allorhizobium ampelinum (strain ATCC BAA-846 / DSM 112012 / S4) (Agrobacterium vitis (strain S4)).